Here is a 179-residue protein sequence, read N- to C-terminus: Large ribosomal subunit protein uL5 (179 aa).

It belongs to the universal ribosomal protein uL5 family. In terms of assembly, part of the 50S ribosomal subunit; part of the 5S rRNA/L5/L18/L25 subcomplex. Contacts the 5S rRNA and the P site tRNA. Forms a bridge to the 30S subunit in the 70S ribosome.

Its function is as follows. This is one of the proteins that bind and probably mediate the attachment of the 5S RNA into the large ribosomal subunit, where it forms part of the central protuberance. In the 70S ribosome it contacts protein S13 of the 30S subunit (bridge B1b), connecting the 2 subunits; this bridge is implicated in subunit movement. Contacts the P site tRNA; the 5S rRNA and some of its associated proteins might help stabilize positioning of ribosome-bound tRNAs. The protein is Large ribosomal subunit protein uL5 of Anaplasma marginale (strain Florida).